We begin with the raw amino-acid sequence, 306 residues long: Non-specific ribonucleoside hydrolase RihC (306 aa).

Histidine 235 is a catalytic residue.

Belongs to the IUNH family. RihC subfamily.

Its function is as follows. Hydrolyzes both purine and pyrimidine ribonucleosides with a broad-substrate specificity. The polypeptide is Non-specific ribonucleoside hydrolase RihC (Salmonella dublin (strain CT_02021853)).